The chain runs to 291 residues: 4-diphosphocytidyl-2-C-methyl-D-erythritol kinase (291 aa).

Residue Lys8 is part of the active site. 89 to 99 (PIGAGVGGGSS) contributes to the ATP binding site. The active site involves Asp131.

The protein belongs to the GHMP kinase family. IspE subfamily.

The catalysed reaction is 4-CDP-2-C-methyl-D-erythritol + ATP = 4-CDP-2-C-methyl-D-erythritol 2-phosphate + ADP + H(+). It participates in isoprenoid biosynthesis; isopentenyl diphosphate biosynthesis via DXP pathway; isopentenyl diphosphate from 1-deoxy-D-xylulose 5-phosphate: step 3/6. Its function is as follows. Catalyzes the phosphorylation of the position 2 hydroxy group of 4-diphosphocytidyl-2C-methyl-D-erythritol. The chain is 4-diphosphocytidyl-2-C-methyl-D-erythritol kinase from Chlamydia caviae (strain ATCC VR-813 / DSM 19441 / 03DC25 / GPIC) (Chlamydophila caviae).